The chain runs to 457 residues: Dolichol phosphate-mannose mannosyltransferase (457 aa).

The Cytoplasmic segment spans residues 1 to 12 (MKRLAKAAFSQN). Residues 13 to 33 (SLTAPIVSTFVYLISVVRVVL) form a helical membrane-spanning segment. The Extracellular segment spans residues 34–91 (NGNWPVTSSDTAMFQHIGWMVFSGKRYYIDAWDPKPPLTLELATIIAYISNGDPHLQH). A helical membrane pass occupies residues 92–112 (TLSVVSTIVAGILLTYLISHI). Topologically, residues 113–120 (TSEITGNQ) are cytoplasmic. Residues 121 to 141 (FAGLLSGIVFITFPVIHYSAV) traverse the membrane as a helical segment. Residues 142–173 (FGYEPKYFVFLFGLGSIYLSRNPKPILSGAAA) lie on the Extracellular side of the membrane. The helical transmembrane segment at 174–194 (AASAGMWQFAIIFPIISFGII) threads the bilayer. Topologically, residues 195–211 (SRRKSKDLILKYVFGAT) are cytoplasmic. The chain crosses the membrane as a helical span at residues 212 to 232 (IIAFISLLPIYLQGGLVAMTV). Residues 233-259 (EVIIAPLYAGETQSFLYRLVKGVTHLK) lie on the Extracellular side of the membrane. A helical transmembrane segment spans residues 260 to 280 (LMIPIALLGMAGILLGFLDDI). The Cytoplasmic portion of the chain corresponds to 281-283 (RER). Residues 284 to 304 (WWVVGLLLWFCIQIFILDYDG) form a helical membrane-spanning segment. Topologically, residues 305 to 307 (ADD) are extracellular. The helical transmembrane segment at 308–328 (LFLGIILVSMGIGFAFEKLST) threads the bilayer. Residues 329–337 (KYESERINS) lie on the Cytoplasmic side of the membrane. A helical transmembrane segment spans residues 338–358 (IVTAVVVCMLIWQVVTLGGVG). Topologically, residues 359-457 (VITNPYSYSG…EEKCGKWRLP (99 aa)) are extracellular.

Its subcellular location is the cell membrane. Its pathway is cell surface structure biogenesis; S-layer biogenesis. It participates in protein modification; protein glycosylation. Involved in the assembly of a N-linked pentasaccharide that decorates the S-layer glycoprotein and flagellins. Transfers mannose, the terminal pentasaccharide residue, from its dedicated dolichol phosphate carrier to the protein-bound glycan comprising the first four subunits of the N-linked pentasaccharide. The protein is Dolichol phosphate-mannose mannosyltransferase (aglS) of Haloferax volcanii (strain ATCC 29605 / DSM 3757 / JCM 8879 / NBRC 14742 / NCIMB 2012 / VKM B-1768 / DS2) (Halobacterium volcanii).